Here is a 101-residue protein sequence, read N- to C-terminus: Ribonuclease kappa-B (101 aa).

A run of 2 helical transmembrane segments spans residues 13-33 and 68-88; these read ACGI…GIFF and VGIN…VSLC.

It belongs to the RNase K family.

The protein localises to the membrane. Its function is as follows. Endoribonuclease which preferentially cleaves ApU and ApG phosphodiester bonds. This Danio rerio (Zebrafish) protein is Ribonuclease kappa-B (rnasekb).